A 54-amino-acid chain; its full sequence is Conotoxin Cal6.17 (54 aa).

Residues 1 to 19 (MSGTGVLLLTLLLLVTMAT) form the signal peptide. 3 disulfide bridges follow: Cys24/Cys39, Cys32/Cys49, and Cys38/Cys53.

Expressed by the venom duct.

It localises to the secreted. Its function is as follows. Probable neurotoxin. The sequence is that of Conotoxin Cal6.17 from Californiconus californicus (California cone).